A 277-amino-acid polypeptide reads, in one-letter code: Probable endonuclease 4 (277 aa).

Zn(2+) is bound by residues His-67, His-107, Glu-142, Asp-176, His-179, His-211, Asp-224, His-226, and Glu-256.

Belongs to the AP endonuclease 2 family. The cofactor is Zn(2+).

It catalyses the reaction Endonucleolytic cleavage to 5'-phosphooligonucleotide end-products.. Endonuclease IV plays a role in DNA repair. It cleaves phosphodiester bonds at apurinic or apyrimidinic (AP) sites, generating a 3'-hydroxyl group and a 5'-terminal sugar phosphate. The protein is Probable endonuclease 4 of Clostridium botulinum (strain Alaska E43 / Type E3).